A 525-amino-acid chain; its full sequence is MLWLWLGLSGQKLLLWGAASAVSLAGATILISIFPMLVSYARKWQQMRSIPSVARAYPLVGHALYMKPNNAEFFQQLIYYTEEFRHLPIIKLWIGPVPLVALYKAENVEVILTSSKQIDKSFLYKFLQPWLGLGLLTSTGSKWRTRRKMLTPTFHFTILENFLDVMNEQANILVNKLEKHVNQEAFNCFFYITLCALDIICETAMGKNIGAQSNNDSEYVRTVYRMSDMIYRRMKMPWLWFDLWYLVFKEGRDHKRGLKCLHTFTNNVIAERVKERKAEEDWTGAGRGPIPSKNKRKAFLDLLLSVTDEEGNRLSQEDIREEVDTFMFEGHDTTAAAINWSLYLLGTNPEVQRKVDQELDEVFGRSHRPVTLEDLKKLKYLDCVIKETLRVFPSVPLFARSLSEDCEVGGYKVTKGTEAIIIPYALHRDPRYFPDPEEFRPERFFPENSQGRHPYAYVPFSAGPRNCIGQKFAVMEEKTILACILRQFWVESNQKREELGLAGDLILRPNNGIWIKLKRRHEDDP.

A helical transmembrane segment spans residues 14–34 (LLWGAASAVSLAGATILISIF). Heme-binding residues include Glu-329 and Cys-467.

It belongs to the cytochrome P450 family. Heme serves as cofactor.

It localises to the endoplasmic reticulum membrane. The catalysed reaction is dodecanoate + reduced [NADPH--hemoprotein reductase] + O2 = 12-hydroxydodecanoate + oxidized [NADPH--hemoprotein reductase] + H2O + H(+). It catalyses the reaction tetradecanoate + reduced [NADPH--hemoprotein reductase] + O2 = 14-hydroxytetradecanoate + oxidized [NADPH--hemoprotein reductase] + H2O + H(+). It carries out the reaction hexadecanoate + reduced [NADPH--hemoprotein reductase] + O2 = 16-hydroxyhexadecanoate + oxidized [NADPH--hemoprotein reductase] + H2O + H(+). The enzyme catalyses (5Z,8Z,11Z,14Z,17Z)-eicosapentaenoate + reduced [NADPH--hemoprotein reductase] + O2 = 20-hydroxy-(5Z,8Z,11Z,14Z,17Z)-eicosapentaenoate + oxidized [NADPH--hemoprotein reductase] + H2O + H(+). The catalysed reaction is (4Z,7Z,10Z,13Z,16Z,19Z)-docosahexaenoate + reduced [NADPH--hemoprotein reductase] + O2 = 22-hydroxy-(4Z,7Z,10Z,13Z,16Z,19Z)-docosahexaenoate + oxidized [NADPH--hemoprotein reductase] + H2O + H(+). It participates in lipid metabolism; fatty acid metabolism. With respect to regulation, inhibited by N-hydroxy-N'-(4-n-butyl-2-methylphenyl formamidine)(HET0016) with an IC(50) of 38 nM. In terms of biological role, a cytochrome P450 monooxygenase involved in fatty acid metabolism in the eye. Catalyzes the omega-hydroxylation of polyunsaturated fatty acids (PUFAs) docosahexaenoate (DHA) and its precursor eicosapentaenoate (EPA), and may contribute to the homeostasis of these retinal PUFAs. Omega hydroxylates saturated fatty acids such as laurate, myristate and palmitate, the catalytic efficiency decreasing in the following order: myristate &gt; laurate &gt; palmitate (C14&gt;C12&gt;C16). Mechanistically, uses molecular oxygen inserting one oxygen atom into a substrate, and reducing the second into a water molecule, with two electrons provided by NADPH via cytochrome P450 reductase (CPR; NADPH-ferrihemoprotein reductase). This is Cytochrome P450 4V2 (Cyp4v2) from Mus musculus (Mouse).